A 735-amino-acid chain; its full sequence is Photosystem I P700 chlorophyll a apoprotein A2 (735 aa).

The next 8 membrane-spanning stretches (helical) occupy residues 46-69 (LFSTHFGHLAIIGLWVSGNLFHIA), 135-158 (LYQGSIFMMILSAWALFAGWLHLQ), 175-199 (LNHHLAVLFGFSSIAWTGHLVHVAI), 273-291 (IAHHHLAIGCLFVIAGHMY), 333-356 (LHFQLGLALASLGVVTSLVAQHMY), 372-398 (AALYTHHQYIAIALMCGAFAHGAIFFI), 420-442 (AIISHLSWVSLFLGFHTLGLYVH), and 518-536 (FLVHHAIALGLHTTTLILV). Positions 560 and 569 each coordinate [4Fe-4S] cluster. A run of 2 helical transmembrane segments spans residues 576-597 (AFYLAVFWALNTVGWLTFYWHW) and 644-666 (LAVWSWMFLFGHLVWATGFMFLI). The chlorophyll a site is built by H655, M663, and Y671. W672 is a binding site for phylloquinone. The helical transmembrane segment at 708–728 (VVGLAHFSVGYVLTYAAFLIA) threads the bilayer.

This sequence belongs to the PsaA/PsaB family. The PsaA/B heterodimer binds the P700 chlorophyll special pair and subsequent electron acceptors. PSI consists of a core antenna complex that captures photons, and an electron transfer chain that converts photonic excitation into a charge separation. The cyanobacterial PSI reaction center is composed of one copy each of PsaA,B,C,D,E,F,I,J,K,L,M and X, and forms trimeric complexes. Requires PSI electron transfer chain: 5 chlorophyll a, 1 chlorophyll a', 2 phylloquinones and 3 4Fe-4S clusters. PSI core antenna: 90 chlorophyll a, 22 carotenoids, 3 phospholipids and 1 galactolipid. P700 is a chlorophyll a/chlorophyll a' dimer, A0 is one or more chlorophyll a, A1 is one or both phylloquinones and FX is a shared 4Fe-4S iron-sulfur center. as cofactor.

It is found in the cellular thylakoid membrane. It catalyses the reaction reduced [plastocyanin] + hnu + oxidized [2Fe-2S]-[ferredoxin] = oxidized [plastocyanin] + reduced [2Fe-2S]-[ferredoxin]. In terms of biological role, psaA and PsaB bind P700, the primary electron donor of photosystem I (PSI), as well as the electron acceptors A0, A1 and FX. PSI is a plastocyanin/cytochrome c6-ferredoxin oxidoreductase, converting photonic excitation into a charge separation, which transfers an electron from the donor P700 chlorophyll pair to the spectroscopically characterized acceptors A0, A1, FX, FA and FB in turn. Oxidized P700 is reduced on the lumenal side of the thylakoid membrane by plastocyanin or cytochrome c6. This Synechococcus sp. (strain CC9902) protein is Photosystem I P700 chlorophyll a apoprotein A2.